The primary structure comprises 377 residues: Putrescine transport ATP-binding protein PotG (377 aa).

An ABC transporter domain is found at 20-250 (LEIRNLTKSY…PTTRYSAEFI (231 aa)). 52–59 (GASGCGKS) is an ATP binding site.

It belongs to the ABC transporter superfamily. In terms of assembly, the complex is composed of two ATP-binding proteins (PotG), two transmembrane proteins (PotH and PotI) and a solute-binding protein (PotF).

It is found in the cell inner membrane. The enzyme catalyses putrescine(out) + ATP + H2O = putrescine(in) + ADP + phosphate + H(+). Transport is feedback inhibited by intracellular polyamines. Part of the ABC transporter complex PotFGHI involved in putrescine uptake. Responsible for energy coupling to the transport system. Imports putrescine for maintenance of the optimal concentration of polyamines necessary for cell growth in the presence of glucose. In Escherichia coli (strain K12), this protein is Putrescine transport ATP-binding protein PotG.